Consider the following 680-residue polypeptide: Translation factor GUF1 homolog, chloroplastic (680 aa).

A chloroplast-targeting transit peptide spans 1-51 (MATATASRLAVPAPRTSPQAPGRRRPAAPLPSAPPRPRALSAAPRGRVVCP). The disordered stretch occupies residues 1 to 68 (MATATASRLA…ASTTDAGQDR (68 aa)). The segment covering 28–37 (APLPSAPPRP) has biased composition (pro residues). Low complexity predominate over residues 38-60 (RALSAAPRGRVVCPAAPASSPAS). Residues 75–256 (SNIRNFSIIA…AIVTKIPPPQ (182 aa)) form the tr-type G domain. Residues 84–91 (AHIDHGKS), 149–153 (DTPGH), and 203–206 (NKID) contribute to the GTP site.

It belongs to the TRAFAC class translation factor GTPase superfamily. Classic translation factor GTPase family. LepA subfamily.

It is found in the plastid. Its subcellular location is the chloroplast. The catalysed reaction is GTP + H2O = GDP + phosphate + H(+). Promotes chloroplast protein synthesis. May act as a fidelity factor of the translation reaction, by catalyzing a one-codon backward translocation of tRNAs on improperly translocated ribosomes. This is Translation factor GUF1 homolog, chloroplastic from Oryza sativa subsp. japonica (Rice).